The following is a 303-amino-acid chain: ATP-dependent (S)-NAD(P)H-hydrate dehydratase (303 aa).

The YjeF C-terminal domain maps to 12 to 299; that stretch reads QQQLVCSVIP…AEVRTAFSML (288 aa). Residues Gly106 and 158–164 contribute to the (6S)-NADPHX site; that span reads NAVELDR. ATP is bound by residues 194-198 and 213-222; these read KGSED and GSPRRCGGQG. Asp223 is a (6S)-NADPHX binding site.

The protein belongs to the NnrD/CARKD family. Mg(2+) is required as a cofactor.

The catalysed reaction is (6S)-NADHX + ATP = ADP + phosphate + NADH + H(+). It catalyses the reaction (6S)-NADPHX + ATP = ADP + phosphate + NADPH + H(+). Catalyzes the dehydration of the S-form of NAD(P)HX at the expense of ATP, which is converted to ADP. Together with NAD(P)HX epimerase, which catalyzes the epimerization of the S- and R-forms, the enzyme allows the repair of both epimers of NAD(P)HX, a damaged form of NAD(P)H that is a result of enzymatic or heat-dependent hydration. The polypeptide is ATP-dependent (S)-NAD(P)H-hydrate dehydratase (Ixodes scapularis (Black-legged tick)).